The primary structure comprises 146 residues: Large ribosomal subunit protein uL15 (146 aa).

Residues 1 to 56 (MSDIQLNTLKPAEGSKHAKRRVGRGIGSGLGKTAGRGHKGQKSRSGGFHKVGFEGG) form a disordered region. A compositionally biased stretch (gly residues) spans 24 to 34 (RGIGSGLGKTA).

It belongs to the universal ribosomal protein uL15 family. In terms of assembly, part of the 50S ribosomal subunit.

Its function is as follows. Binds to the 23S rRNA. The protein is Large ribosomal subunit protein uL15 of Bordetella bronchiseptica (strain ATCC BAA-588 / NCTC 13252 / RB50) (Alcaligenes bronchisepticus).